Here is a 148-residue protein sequence, read N- to C-terminus: MVIILLGVSIVVPGLFLATETPQTNTFEQTELERATLTGEVSTEVTQVTNQEQVNITVLNRRDGTIDSTGELQVGESANLTISGETITVEIIDVIDTDNVLVRYTYPLYVGWPSGAETIITNIADIIIMATAVMIIGAIYTGYKVSIK.

The first 18 residues, 1–18 (MVIILLGVSIVVPGLFLA), serve as a signal peptide directing secretion. The Extracellular segment spans residues 19-118 (TETPQTNTFE…YVGWPSGAET (100 aa)). The helical transmembrane segment at 119-139 (IITNIADIIIMATAVMIIGAI) threads the bilayer. Topologically, residues 140–148 (YTGYKVSIK) are cytoplasmic.

The protein localises to the host membrane. The polypeptide is Putative transmembrane protein ORF23 (His1 virus (isolate Australia/Victoria) (His1V)).